Here is a 207-residue protein sequence, read N- to C-terminus: uncharacterized protein (207 aa).

This sequence belongs to the flavoredoxin family. It depends on FMN as a cofactor.

This is an uncharacterized protein from Bacillus subtilis (strain 168).